Here is a 426-residue protein sequence, read N- to C-terminus: 3-phosphoshikimate 1-carboxyvinyltransferase (426 aa).

Residues Lys21, Ser22, and Arg26 each coordinate 3-phosphoshikimate. Position 21 (Lys21) interacts with phosphoenolpyruvate. Positions 93 and 121 each coordinate phosphoenolpyruvate. The 3-phosphoshikimate site is built by Ser165, Gln167, Asp313, and Lys340. Residue Gln167 coordinates phosphoenolpyruvate. The active-site Proton acceptor is Asp313. Arg344 and Arg386 together coordinate phosphoenolpyruvate.

It belongs to the EPSP synthase family. In terms of assembly, monomer.

The protein resides in the cytoplasm. It catalyses the reaction 3-phosphoshikimate + phosphoenolpyruvate = 5-O-(1-carboxyvinyl)-3-phosphoshikimate + phosphate. Its pathway is metabolic intermediate biosynthesis; chorismate biosynthesis; chorismate from D-erythrose 4-phosphate and phosphoenolpyruvate: step 6/7. Catalyzes the transfer of the enolpyruvyl moiety of phosphoenolpyruvate (PEP) to the 5-hydroxyl of shikimate-3-phosphate (S3P) to produce enolpyruvyl shikimate-3-phosphate and inorganic phosphate. In Solibacter usitatus (strain Ellin6076), this protein is 3-phosphoshikimate 1-carboxyvinyltransferase.